Here is a 95-residue protein sequence, read N- to C-terminus: Large ribosomal subunit protein bL25 (95 aa).

It belongs to the bacterial ribosomal protein bL25 family. Part of the 50S ribosomal subunit; part of the 5S rRNA/L5/L18/L25 subcomplex. Contacts the 5S rRNA. Binds to the 5S rRNA independently of L5 and L18.

This is one of the proteins that binds to the 5S RNA in the ribosome where it forms part of the central protuberance. In Shewanella baltica (strain OS223), this protein is Large ribosomal subunit protein bL25.